The sequence spans 787 residues: Bifunctional dethiobiotin synthetase/adenosylmethionine-8-amino-7-oxononanoate aminotransferase (787 aa).

D23–I28 contributes to the ATP binding site. T27 provides a ligand contact to Mg(2+). T54 provides a ligand contact to substrate. Mg(2+) contacts are provided by D61 and E123. Residues E123 to G126 and K184 to D185 contribute to the ATP site. W323–W324 is a binding site for (8S)-8-amino-7-oxononanoate. G384–S385 is a pyridoxal 5'-phosphate binding site. Y421 contacts (8S)-8-amino-7-oxononanoate. D582 is a binding site for pyridoxal 5'-phosphate. Positions 611 and 645 each coordinate (8S)-8-amino-7-oxononanoate. H646–S647 contributes to the pyridoxal 5'-phosphate binding site. R756 is a (8S)-8-amino-7-oxononanoate binding site.

The protein in the N-terminal section; belongs to the dethiobiotin synthetase family. It in the C-terminal section; belongs to the class-III pyridoxal-phosphate-dependent aminotransferase family. BioA subfamily. Homodimer. Requires Mg(2+) as cofactor. The cofactor is pyridoxal 5'-phosphate.

It localises to the mitochondrion matrix. The enzyme catalyses (7R,8S)-7,8-diammoniononanoate + CO2 + ATP = (4R,5S)-dethiobiotin + ADP + phosphate + 3 H(+). The catalysed reaction is (8S)-8-amino-7-oxononanoate + S-adenosyl-L-methionine = S-adenosyl-4-methylsulfanyl-2-oxobutanoate + (7R,8S)-7,8-diammoniononanoate. It participates in cofactor biosynthesis; biotin biosynthesis; biotin from 7,8-diaminononanoate: step 1/2. The protein operates within cofactor biosynthesis; biotin biosynthesis; 7,8-diaminononanoate from 8-amino-7-oxononanoate (SAM route): step 1/1. In terms of biological role, bifunctional enzyme; part of the cluster involved in the biosynthesis of biotin (also known as vitamin B8 or vitamin H), a water-soluble vitamin that functions as a prosthetic group of many carboxylases, such as acetyl-CoA carboxylase and pyruvate carboxylase. Catalyzes a mechanistically unusual reaction, the ATP-dependent insertion of CO2 between the N7 and N8 nitrogen atoms of 7,8-diaminopelargonic acid (DAPA) to form an ureido ring. Also catalyzes the transfer of the alpha-amino group from S-adenosyl-L-methionine (SAM) to 7-keto-8-aminopelargonic acid (KAPA) to form 7,8-diaminopelargonic acid (DAPA). It is the only animotransferase known to utilize SAM as an amino donor. The polypeptide is Bifunctional dethiobiotin synthetase/adenosylmethionine-8-amino-7-oxononanoate aminotransferase (Emericella nidulans (strain FGSC A4 / ATCC 38163 / CBS 112.46 / NRRL 194 / M139) (Aspergillus nidulans)).